The primary structure comprises 399 residues: Glucose-1-phosphate adenylyltransferase (399 aa).

Residues Tyr-100, Gly-165, 180–181, and Ser-191 contribute to the alpha-D-glucose 1-phosphate site; that span reads EK.

It belongs to the bacterial/plant glucose-1-phosphate adenylyltransferase family. As to quaternary structure, homotetramer.

It carries out the reaction alpha-D-glucose 1-phosphate + ATP + H(+) = ADP-alpha-D-glucose + diphosphate. Its pathway is glycan biosynthesis; glycogen biosynthesis. Functionally, involved in the biosynthesis of ADP-glucose, a building block required for the elongation reactions to produce glycogen. Catalyzes the reaction between ATP and alpha-D-glucose 1-phosphate (G1P) to produce pyrophosphate and ADP-Glc. The chain is Glucose-1-phosphate adenylyltransferase from Desulforamulus reducens (strain ATCC BAA-1160 / DSM 100696 / MI-1) (Desulfotomaculum reducens).